The sequence spans 292 residues: MNTSDRIKSTQIALDRDLREQALLLLKEVRAVDGVDALSEQFVRGLAEPGLGHSHLIVTLNDKLVGLAATDEETTELAVHPAHRRQGIGKALIDATPTSSIWAHGNTAGAQALASTLRMKKTRELLVMEISDRALDDSAAYKDPDGITHSSLANAPVEKSVAEAKWLQSNNEAFDWHPEQGGWTTHRLAQAQKADWYKDSDVLFLWDGEEIVGFHWVKQHSPELQEIYVVGLSSAYRGRGLGDPLVRLGLHHMRAHGARKVILYVEAGNTPAVAAYEKLGFTVAESHVVYEK.

2 N-acetyltransferase domains span residues 13–168 and 159–292; these read ALDR…KWLQ and KSVA…VYEK. Residue Glu-40 coordinates 1D-myo-inositol 2-(L-cysteinylamino)-2-deoxy-alpha-D-glucopyranoside. 77-79 contributes to the acetyl-CoA binding site; it reads LAV. 1D-myo-inositol 2-(L-cysteinylamino)-2-deoxy-alpha-D-glucopyranoside-binding residues include Glu-179, Lys-218, and Glu-226. Residues 230-232 and 237-243 contribute to the acetyl-CoA site; these read VGL and RGRGLGD. Tyr-264 lines the 1D-myo-inositol 2-(L-cysteinylamino)-2-deoxy-alpha-D-glucopyranoside pocket.

It belongs to the acetyltransferase family. MshD subfamily. In terms of assembly, monomer.

The enzyme catalyses 1D-myo-inositol 2-(L-cysteinylamino)-2-deoxy-alpha-D-glucopyranoside + acetyl-CoA = mycothiol + CoA + H(+). In terms of biological role, catalyzes the transfer of acetyl from acetyl-CoA to desacetylmycothiol (Cys-GlcN-Ins) to form mycothiol. The sequence is that of Mycothiol acetyltransferase from Corynebacterium glutamicum (strain ATCC 13032 / DSM 20300 / JCM 1318 / BCRC 11384 / CCUG 27702 / LMG 3730 / NBRC 12168 / NCIMB 10025 / NRRL B-2784 / 534).